The primary structure comprises 1502 residues: Rho GTPase-activating protein 5 (1502 aa).

FF domains are found at residues 267–325 (QLVV…HIEQ), 366–420 (KLME…HVQH), 427–481 (RVEM…HQRE), and 482–548 (IVEK…HIGF). Tyr550 is modified (3'-nitrotyrosine). Ser590 and Ser765 each carry phosphoserine. The pG1 pseudoGTPase domain occupies 590–763 (STNIDKVNLF…LESVKHNLDV (174 aa)). Residues 779–944 (RIVMCAMCGD…FSDVLEKKNM (166 aa)) form the pG2 pseudoGTPase domain. Phosphoserine is present on residues Ser951 and Ser968. 3 disordered regions span residues 975 to 1004 (YNNY…LPTP), 1022 to 1050 (HSTP…PKTN), and 1069 to 1089 (NPRK…DPSD). The span at 1036–1045 (VPPPIKPKPV) shows a compositional bias: pro residues. Position 1115 is a phosphoserine (Ser1115). Disordered regions lie at residues 1125 to 1156 (FVNN…YKYK) and 1168 to 1254 (YRRT…TRRN). A compositionally biased stretch (basic and acidic residues) spans 1140-1150 (RTSKSHGERRP). 5 positions are modified to phosphoserine: Ser1173, Ser1176, Ser1195, Ser1202, and Ser1218. One can recognise a Rho-GAP domain in the interval 1262–1449 (MPLQDLVTAE…TFIQQCQFFF (188 aa)).

As to quaternary structure, may interact with RASA1/p120GAP. Detected in skin fibroblasts (at protein level).

The protein resides in the cytoplasm. The protein localises to the cell membrane. Functionally, GTPase-activating protein for Rho family members. In Homo sapiens (Human), this protein is Rho GTPase-activating protein 5 (ARHGAP5).